The following is a 168-amino-acid chain: Crossover junction endodeoxyribonuclease RuvC (168 aa).

Active-site residues include Asp-10, Glu-70, and Asp-143. The Mg(2+) site is built by Asp-10, Glu-70, and Asp-143.

Belongs to the RuvC family. In terms of assembly, homodimer which binds Holliday junction (HJ) DNA. The HJ becomes 2-fold symmetrical on binding to RuvC with unstacked arms; it has a different conformation from HJ DNA in complex with RuvA. In the full resolvosome a probable DNA-RuvA(4)-RuvB(12)-RuvC(2) complex forms which resolves the HJ. Mg(2+) serves as cofactor.

It localises to the cytoplasm. It catalyses the reaction Endonucleolytic cleavage at a junction such as a reciprocal single-stranded crossover between two homologous DNA duplexes (Holliday junction).. Functionally, the RuvA-RuvB-RuvC complex processes Holliday junction (HJ) DNA during genetic recombination and DNA repair. Endonuclease that resolves HJ intermediates. Cleaves cruciform DNA by making single-stranded nicks across the HJ at symmetrical positions within the homologous arms, yielding a 5'-phosphate and a 3'-hydroxyl group; requires a central core of homology in the junction. The consensus cleavage sequence is 5'-(A/T)TT(C/G)-3'. Cleavage occurs on the 3'-side of the TT dinucleotide at the point of strand exchange. HJ branch migration catalyzed by RuvA-RuvB allows RuvC to scan DNA until it finds its consensus sequence, where it cleaves and resolves the cruciform DNA. This Thermotoga maritima (strain ATCC 43589 / DSM 3109 / JCM 10099 / NBRC 100826 / MSB8) protein is Crossover junction endodeoxyribonuclease RuvC.